A 174-amino-acid chain; its full sequence is MNIVLVGLMGSGKTAVGRLLAERLGRPFVDTDRLVEADAGRTVADIFAAEGEEGFRRREAEVVARAAAGDNQVIATGGGAVLRTENREALRRTGFVIWLDAEPETLYDRARGQGLHRRPLLSGPDPLGRLRALAAARRPFYAQAAHVRICTDRRSLQDVVAEIMEKLQERGERG.

10 to 15 contributes to the ATP binding site; it reads GSGKTA. A Mg(2+)-binding site is contributed by T14. Substrate-binding residues include D32, R56, and G78. ATP is bound at residue R118. R137 lines the substrate pocket. R154 contacts ATP.

Belongs to the shikimate kinase family. Monomer. It depends on Mg(2+) as a cofactor.

It is found in the cytoplasm. It carries out the reaction shikimate + ATP = 3-phosphoshikimate + ADP + H(+). Its pathway is metabolic intermediate biosynthesis; chorismate biosynthesis; chorismate from D-erythrose 4-phosphate and phosphoenolpyruvate: step 5/7. Its function is as follows. Catalyzes the specific phosphorylation of the 3-hydroxyl group of shikimic acid using ATP as a cosubstrate. The sequence is that of Shikimate kinase from Symbiobacterium thermophilum (strain DSM 24528 / JCM 14929 / IAM 14863 / T).